Here is a 111-residue protein sequence, read N- to C-terminus: MKWKVLQLKTQEIKVNNLAKSSLHQPGSLVLRNRIRNNQTISNHQKVYITNLHKDKLKLNNLLRLMKSTNRHMPFRNLVLATGQELALLHNKRKRRKTLPLALFYSHLILL.

Its subcellular location is the cytoplasm. It is found in the nucleus. This is an uncharacterized protein from Saccharomyces cerevisiae (strain ATCC 204508 / S288c) (Baker's yeast).